Here is a 616-residue protein sequence, read N- to C-terminus: Dihydroxy-acid dehydratase (616 aa).

Asp-81 contacts Mg(2+). Cys-122 is a binding site for [2Fe-2S] cluster. Mg(2+) contacts are provided by Asp-123 and Lys-124. Lys-124 carries the post-translational modification N6-carboxylysine. Cys-195 provides a ligand contact to [2Fe-2S] cluster. Glu-491 lines the Mg(2+) pocket. Ser-517 acts as the Proton acceptor in catalysis.

The protein belongs to the IlvD/Edd family. Homodimer. It depends on [2Fe-2S] cluster as a cofactor. Mg(2+) serves as cofactor.

The enzyme catalyses (2R)-2,3-dihydroxy-3-methylbutanoate = 3-methyl-2-oxobutanoate + H2O. The catalysed reaction is (2R,3R)-2,3-dihydroxy-3-methylpentanoate = (S)-3-methyl-2-oxopentanoate + H2O. It functions in the pathway amino-acid biosynthesis; L-isoleucine biosynthesis; L-isoleucine from 2-oxobutanoate: step 3/4. The protein operates within amino-acid biosynthesis; L-valine biosynthesis; L-valine from pyruvate: step 3/4. Functionally, functions in the biosynthesis of branched-chain amino acids. Catalyzes the dehydration of (2R,3R)-2,3-dihydroxy-3-methylpentanoate (2,3-dihydroxy-3-methylvalerate) into 2-oxo-3-methylpentanoate (2-oxo-3-methylvalerate) and of (2R)-2,3-dihydroxy-3-methylbutanoate (2,3-dihydroxyisovalerate) into 2-oxo-3-methylbutanoate (2-oxoisovalerate), the penultimate precursor to L-isoleucine and L-valine, respectively. The chain is Dihydroxy-acid dehydratase from Pectobacterium carotovorum subsp. carotovorum (strain PC1).